We begin with the raw amino-acid sequence, 193 residues long: Ribonuclease HII (193 aa).

Positions 1–193 (MTLGIDEAGR…SFALKNNWFS (193 aa)) constitute an RNase H type-2 domain. Positions 6, 7, and 103 each coordinate a divalent metal cation.

It belongs to the RNase HII family. Mn(2+) is required as a cofactor. Requires Mg(2+) as cofactor.

The protein resides in the cytoplasm. It carries out the reaction Endonucleolytic cleavage to 5'-phosphomonoester.. Endonuclease that specifically degrades the RNA of RNA-DNA hybrids. The polypeptide is Ribonuclease HII (Helicobacter acinonychis (strain Sheeba)).